The sequence spans 232 residues: Heptaprenylglyceryl phosphate synthase (232 aa).

K12 serves as a coordination point for sn-glycerol 1-phosphate. D14 and T40 together coordinate Mg(2+). Residues 159-164 (YLEYSG), G189, and 209-210 (GN) contribute to the sn-glycerol 1-phosphate site.

This sequence belongs to the GGGP/HepGP synthase family. Group I subfamily. Homodimer. The cofactor is Mg(2+).

The catalysed reaction is sn-glycerol 1-phosphate + all-trans-heptaprenyl diphosphate = 3-heptaprenyl-sn-glycero-1-phosphate + diphosphate. The protein operates within membrane lipid metabolism; glycerophospholipid metabolism. Functionally, prenyltransferase that catalyzes in vivo the transfer of the heptaprenyl moiety of heptaprenyl pyrophosphate (HepPP; 35 carbon atoms) to the C3 hydroxyl of sn-glycerol-1-phosphate (G1P), producing heptaprenylglyceryl phosphate (HepGP). This reaction is an ether-bond-formation step in the biosynthesis of archaea-type G1P-based membrane lipids found in Bacillales. The chain is Heptaprenylglyceryl phosphate synthase from Shouchella clausii (strain KSM-K16) (Alkalihalobacillus clausii).